The primary structure comprises 118 residues: MARVKTGVVRRRRHKKVLKLARGFFSARHKHFRKAKEQLERSLVYAYRDRRQKKRDFRRLWIVRINAACRLNDISYSRFINGLNKANIELDRKILADLAMNDAKAFAALAKQAKDALK.

Belongs to the bacterial ribosomal protein bL20 family.

In terms of biological role, binds directly to 23S ribosomal RNA and is necessary for the in vitro assembly process of the 50S ribosomal subunit. It is not involved in the protein synthesizing functions of that subunit. This is Large ribosomal subunit protein bL20 from Campylobacter concisus (strain 13826).